Reading from the N-terminus, the 229-residue chain is Small ribosomal subunit protein uS5 (229 aa).

The region spanning 61–124 (LEEQVLDVKL…AHAKLSLIKV (64 aa)) is the S5 DRBM domain.

The protein belongs to the universal ribosomal protein uS5 family. As to quaternary structure, part of the 30S ribosomal subunit. Contacts protein S4.

Functionally, with S4 and S12 plays an important role in translational accuracy. This chain is Small ribosomal subunit protein uS5, found in Methanococcus maripaludis (strain C7 / ATCC BAA-1331).